A 188-amino-acid polypeptide reads, in one-letter code: Elongation factor P (188 aa).

The residue at position 34 (lysine 34) is an N6-(3,6-diaminohexanoyl)-5-hydroxylysine.

The protein belongs to the elongation factor P family. Post-translationally, may be beta-lysylated on the epsilon-amino group of Lys-34 by the combined action of EpmA and EpmB, and then hydroxylated on the C5 position of the same residue by EpmC (if this protein is present). Lysylation is critical for the stimulatory effect of EF-P on peptide-bond formation. The lysylation moiety may extend toward the peptidyltransferase center and stabilize the terminal 3-CCA end of the tRNA. Hydroxylation of the C5 position on Lys-34 may allow additional potential stabilizing hydrogen-bond interactions with the P-tRNA.

It localises to the cytoplasm. The protein operates within protein biosynthesis; polypeptide chain elongation. Involved in peptide bond synthesis. Alleviates ribosome stalling that occurs when 3 or more consecutive Pro residues or the sequence PPG is present in a protein, possibly by augmenting the peptidyl transferase activity of the ribosome. Modification of Lys-34 is required for alleviation. The protein is Elongation factor P of Erwinia tasmaniensis (strain DSM 17950 / CFBP 7177 / CIP 109463 / NCPPB 4357 / Et1/99).